Consider the following 396-residue polypeptide: 1-deoxy-D-xylulose 5-phosphate reductoisomerase (396 aa).

Residues Thr-10, Gly-11, Ser-12, Ile-13, Gly-36, Lys-37, Asn-38, and Asn-124 each contribute to the NADPH site. Residue Lys-125 coordinates 1-deoxy-D-xylulose 5-phosphate. Glu-126 is an NADPH binding site. A Mn(2+)-binding site is contributed by Asp-150. 1-deoxy-D-xylulose 5-phosphate-binding residues include Ser-151, Glu-152, Ser-186, and His-209. Residue Glu-152 participates in Mn(2+) binding. Residue Gly-215 coordinates NADPH. Positions 222, 227, 228, and 231 each coordinate 1-deoxy-D-xylulose 5-phosphate. Glu-231 serves as a coordination point for Mn(2+).

Belongs to the DXR family. Requires Mg(2+) as cofactor. Mn(2+) serves as cofactor.

The catalysed reaction is 2-C-methyl-D-erythritol 4-phosphate + NADP(+) = 1-deoxy-D-xylulose 5-phosphate + NADPH + H(+). The protein operates within isoprenoid biosynthesis; isopentenyl diphosphate biosynthesis via DXP pathway; isopentenyl diphosphate from 1-deoxy-D-xylulose 5-phosphate: step 1/6. Functionally, catalyzes the NADPH-dependent rearrangement and reduction of 1-deoxy-D-xylulose-5-phosphate (DXP) to 2-C-methyl-D-erythritol 4-phosphate (MEP). This is 1-deoxy-D-xylulose 5-phosphate reductoisomerase from Glaesserella parasuis serovar 5 (strain SH0165) (Haemophilus parasuis).